A 410-amino-acid chain; its full sequence is 3-phenylpropionate/cinnamic acid dioxygenase ferredoxin--NAD(+) reductase component (410 aa).

5-36 (TIIIVGGGQAAAMAAASLRQQGFTGELHLFSD) contacts FAD. An NAD(+)-binding site is contributed by 146–184 (SVVIVGAGTIGLELAASATQRSAAQRSAAQRRCKVTVIE).

Belongs to the bacterial ring-hydroxylating dioxygenase ferredoxin reductase family. As to quaternary structure, this dioxygenase system consists of four proteins: the two subunits of the hydroxylase component (HcaE and HcaF), a ferredoxin (HcaC) and a ferredoxin reductase (HcaD). FAD is required as a cofactor.

It carries out the reaction 2 reduced [2Fe-2S]-[ferredoxin] + NAD(+) + H(+) = 2 oxidized [2Fe-2S]-[ferredoxin] + NADH. It participates in aromatic compound metabolism; 3-phenylpropanoate degradation. Functionally, part of the multicomponent 3-phenylpropionate dioxygenase, that converts 3-phenylpropionic acid (PP) and cinnamic acid (CI) into 3-phenylpropionate-dihydrodiol (PP-dihydrodiol) and cinnamic acid-dihydrodiol (CI-dihydrodiol), respectively. This chain is 3-phenylpropionate/cinnamic acid dioxygenase ferredoxin--NAD(+) reductase component, found in Shigella flexneri serotype 5b (strain 8401).